A 107-amino-acid chain; its full sequence is UPF0122 protein MYPE4850 (107 aa).

It belongs to the UPF0122 family.

Functionally, might take part in the signal recognition particle (SRP) pathway. This is inferred from the conservation of its genetic proximity to ftsY/ffh. May be a regulatory protein. This Malacoplasma penetrans (strain HF-2) (Mycoplasma penetrans) protein is UPF0122 protein MYPE4850.